Here is a 694-residue protein sequence, read N- to C-terminus: Ribonuclease R (694 aa).

In terms of domain architecture, RNB spans 204–525; that stretch reads RKDLRDLLCF…IVHRLLFHPL (322 aa). Residues 571–648 enclose the S1 motif domain; that stretch reads ATLYKAFIIT…LTQSIEWTLV (78 aa). A disordered region spans residues 652 to 694; the sequence is TKAKAKRTSKKKKTESVTTKEKKKSPAKKKKGATKTKKGSGKN. 2 stretches are compositionally biased toward basic residues: residues 654–664 and 672–694; these read AKAKRTSKKKK and EKKK…SGKN.

This sequence belongs to the RNR ribonuclease family. RNase R subfamily.

It is found in the cytoplasm. The enzyme catalyses Exonucleolytic cleavage in the 3'- to 5'-direction to yield nucleoside 5'-phosphates.. 3'-5' exoribonuclease that releases 5'-nucleoside monophosphates and is involved in maturation of structured RNAs. The sequence is that of Ribonuclease R from Chlamydia trachomatis serovar D (strain ATCC VR-885 / DSM 19411 / UW-3/Cx).